Reading from the N-terminus, the 159-residue chain is 2-C-methyl-D-erythritol 2,4-cyclodiphosphate synthase (159 aa).

A divalent metal cation is bound by residues D10 and H12. Residues 10–12 and 37–38 contribute to the 4-CDP-2-C-methyl-D-erythritol 2-phosphate site; these read DVH and HS. Position 45 (H45) interacts with a divalent metal cation. 4-CDP-2-C-methyl-D-erythritol 2-phosphate is bound by residues 59-61, 64-68, 103-109, 135-138, F142, and R145; these read DIG, FLDTD, AQAPKML, and TTTE.

Belongs to the IspF family. In terms of assembly, homotrimer. It depends on a divalent metal cation as a cofactor.

The enzyme catalyses 4-CDP-2-C-methyl-D-erythritol 2-phosphate = 2-C-methyl-D-erythritol 2,4-cyclic diphosphate + CMP. It participates in isoprenoid biosynthesis; isopentenyl diphosphate biosynthesis via DXP pathway; isopentenyl diphosphate from 1-deoxy-D-xylulose 5-phosphate: step 4/6. Involved in the biosynthesis of isopentenyl diphosphate (IPP) and dimethylallyl diphosphate (DMAPP), two major building blocks of isoprenoid compounds. Catalyzes the conversion of 4-diphosphocytidyl-2-C-methyl-D-erythritol 2-phosphate (CDP-ME2P) to 2-C-methyl-D-erythritol 2,4-cyclodiphosphate (ME-CPP) with a corresponding release of cytidine 5-monophosphate (CMP). This Francisella tularensis subsp. holarctica (strain FTNF002-00 / FTA) protein is 2-C-methyl-D-erythritol 2,4-cyclodiphosphate synthase.